The chain runs to 129 residues: Small ribosomal subunit protein uS11 (129 aa).

This sequence belongs to the universal ribosomal protein uS11 family. In terms of assembly, part of the 30S ribosomal subunit. Interacts with proteins S7 and S18. Binds to IF-3.

In terms of biological role, located on the platform of the 30S subunit, it bridges several disparate RNA helices of the 16S rRNA. Forms part of the Shine-Dalgarno cleft in the 70S ribosome. In Staphylococcus epidermidis (strain ATCC 12228 / FDA PCI 1200), this protein is Small ribosomal subunit protein uS11.